The chain runs to 528 residues: GMP synthase [glutamine-hydrolyzing] (528 aa).

Residues 13–204 enclose the Glutamine amidotransferase type-1 domain; that stretch reads SILILDFGSQ…VYKISCCAAD (192 aa). The active-site Nucleophile is cysteine 90. Active-site residues include histidine 178 and glutamate 180. The GMPS ATP-PPase domain maps to 205–403; it reads WTTETYIEET…LGLPAEIIKR (199 aa). 232–238 contributes to the ATP binding site; that stretch reads SGGVDSS.

In terms of assembly, homodimer.

It carries out the reaction XMP + L-glutamine + ATP + H2O = GMP + L-glutamate + AMP + diphosphate + 2 H(+). It functions in the pathway purine metabolism; GMP biosynthesis; GMP from XMP (L-Gln route): step 1/1. Its function is as follows. Catalyzes the synthesis of GMP from XMP. The polypeptide is GMP synthase [glutamine-hydrolyzing] (Prochlorococcus marinus (strain MIT 9215)).